A 579-amino-acid chain; its full sequence is Salivary alpha-glucosidase (579 aa).

The first 18 residues, 1 to 18 (MKIFVPLLSFLLAGLTTG), serve as a signal peptide directing secretion. The Ca(2+) site is built by Asp37, Asp39, Asp41, Ile43, Asp45, and Asn118. Residues Asn118 and Asn151 are each glycosylated (N-linked (GlcNAc...) asparagine). Asp189 contacts Ca(2+). The active-site Nucleophile is Asp219. Ca(2+) is bound by residues Tyr223, Leu224, and Glu226. Residue Asn282 is glycosylated (N-linked (GlcNAc...) asparagine). The Proton donor role is filled by Glu290. N-linked (GlcNAc...) asparagine glycans are attached at residues Asn304, Asn325, and Asn401. Asn325 contributes to the N-acetyl-beta-D-glucosamine binding site.

Belongs to the glycosyl hydrolase 13 family. As to expression, saliva (at protein level). Proximal lateral lobes of the salivary gland (at protein level).

The protein localises to the secreted. It catalyses the reaction Hydrolysis of terminal, non-reducing (1-&gt;4)-linked alpha-D-glucose residues with release of alpha-D-glucose.. Functions as a glucosidase that shows high activity toward sucrose, a major component of nectar. Assists the mosquito in its sugar-feeding capabilities. The polypeptide is Salivary alpha-glucosidase (Aedes aegypti (Yellowfever mosquito)).